Here is a 353-residue protein sequence, read N- to C-terminus: 41 kDa protein (353 aa).

Residues Gln132–Asp197 are disordered. Residues Leu157–Asn169 are compositionally biased toward basic and acidic residues.

The protein is 41 kDa protein of Lactobacillus helveticus (Lactobacillus suntoryeus).